The following is a 420-amino-acid chain: Glycerol-3-phosphate dehydrogenase [NAD(+)] (420 aa).

NAD(+)-binding positions include 16–21 (GSGNWG), phenylalanine 48, and phenylalanine 119. Lysine 142 is a substrate binding site. Alanine 175 lines the NAD(+) pocket. Residues 190-217 (YDPPPMDNSRAPTPRSNSPANGNGIAPL) form a disordered region. The span at 199–210 (RAPTPRSNSPAN) shows a compositional bias: polar residues. The active-site Proton acceptor is the lysine 278. NAD(+)-binding residues include arginine 344 and glutamine 373. 344–345 (RN) provides a ligand contact to substrate.

It belongs to the NAD-dependent glycerol-3-phosphate dehydrogenase family.

It carries out the reaction sn-glycerol 3-phosphate + NAD(+) = dihydroxyacetone phosphate + NADH + H(+). The chain is Glycerol-3-phosphate dehydrogenase [NAD(+)] from Colletotrichum gloeosporioides (Anthracnose fungus).